Here is a 184-residue protein sequence, read N- to C-terminus: Ribosome-recycling factor (184 aa).

It belongs to the RRF family.

It localises to the cytoplasm. Responsible for the release of ribosomes from messenger RNA at the termination of protein biosynthesis. May increase the efficiency of translation by recycling ribosomes from one round of translation to another. This chain is Ribosome-recycling factor, found in Psychrobacter arcticus (strain DSM 17307 / VKM B-2377 / 273-4).